The sequence spans 295 residues: UDP-N-acetylenolpyruvoylglucosamine reductase (295 aa).

The region spanning 24-188 (KVGGNAEIFF…LKVVFKINKG (165 aa)) is the FAD-binding PCMH-type domain. The active site involves R168. S217 (proton donor) is an active-site residue. The active site involves E287.

The protein belongs to the MurB family. The cofactor is FAD.

The protein localises to the cytoplasm. The catalysed reaction is UDP-N-acetyl-alpha-D-muramate + NADP(+) = UDP-N-acetyl-3-O-(1-carboxyvinyl)-alpha-D-glucosamine + NADPH + H(+). The protein operates within cell wall biogenesis; peptidoglycan biosynthesis. In terms of biological role, cell wall formation. In Rickettsia peacockii (strain Rustic), this protein is UDP-N-acetylenolpyruvoylglucosamine reductase.